A 209-amino-acid polypeptide reads, in one-letter code: Probable glutathione peroxidase 8-B (209 aa).

The chain crosses the membrane as a helical span at residues 18–40; sequence VFLVFFSMVLCTGILCVLQLKFL. Residue cysteine 79 is part of the active site.

This sequence belongs to the glutathione peroxidase family.

Its subcellular location is the membrane. It catalyses the reaction 2 glutathione + H2O2 = glutathione disulfide + 2 H2O. The polypeptide is Probable glutathione peroxidase 8-B (gpx8-b) (Xenopus laevis (African clawed frog)).